The sequence spans 250 residues: Uracil-DNA glycosylase (250 aa).

D78 functions as the Proton acceptor in the catalytic mechanism. A disordered region spans residues 228 to 250 (RGQKPVDWSGEQNNASRQGKFAL).

This sequence belongs to the uracil-DNA glycosylase (UDG) superfamily. UNG family.

The protein resides in the cytoplasm. The catalysed reaction is Hydrolyzes single-stranded DNA or mismatched double-stranded DNA and polynucleotides, releasing free uracil.. Functionally, excises uracil residues from the DNA which can arise as a result of misincorporation of dUMP residues by DNA polymerase or due to deamination of cytosine. The protein is Uracil-DNA glycosylase of Bordetella bronchiseptica (strain ATCC BAA-588 / NCTC 13252 / RB50) (Alcaligenes bronchisepticus).